We begin with the raw amino-acid sequence, 386 residues long: Succinate--CoA ligase [ADP-forming] subunit beta (386 aa).

The ATP-grasp domain maps to 9-244 (KEILKQYGVK…LDEEDEKEIE (236 aa)). Residues lysine 46, 53-55 (GRG), glutamate 99, cysteine 102, and glutamate 107 each bind ATP. Mg(2+) contacts are provided by asparagine 199 and aspartate 213. Residues asparagine 264 and 321 to 323 (GIM) contribute to the substrate site.

The protein belongs to the succinate/malate CoA ligase beta subunit family. In terms of assembly, heterotetramer of two alpha and two beta subunits. Requires Mg(2+) as cofactor.

The enzyme catalyses succinate + ATP + CoA = succinyl-CoA + ADP + phosphate. The catalysed reaction is GTP + succinate + CoA = succinyl-CoA + GDP + phosphate. It participates in carbohydrate metabolism; tricarboxylic acid cycle; succinate from succinyl-CoA (ligase route): step 1/1. Its function is as follows. Succinyl-CoA synthetase functions in the citric acid cycle (TCA), coupling the hydrolysis of succinyl-CoA to the synthesis of either ATP or GTP and thus represents the only step of substrate-level phosphorylation in the TCA. The beta subunit provides nucleotide specificity of the enzyme and binds the substrate succinate, while the binding sites for coenzyme A and phosphate are found in the alpha subunit. This Brevibacillus brevis (strain 47 / JCM 6285 / NBRC 100599) protein is Succinate--CoA ligase [ADP-forming] subunit beta.